The sequence spans 858 residues: Bifunctional uridylyltransferase/uridylyl-removing enzyme (858 aa).

Residues 1-318 are uridylyltransferase; that stretch reads MNPTDLHPIK…FPRPESDARA (318 aa). Positions 319-674 are uridylyl-removing; the sequence is IDEEFRSLHG…VRPTEEGSGL (356 aa). The HD domain occupies 437-559; the sequence is VDQHTLAVIR…VKDERHLNAL (123 aa). 2 ACT domains span residues 675–756 and 789–858; these read QIMV…LADV and RLSV…LAGE.

Belongs to the GlnD family. Requires Mg(2+) as cofactor.

The enzyme catalyses [protein-PII]-L-tyrosine + UTP = [protein-PII]-uridylyl-L-tyrosine + diphosphate. It catalyses the reaction [protein-PII]-uridylyl-L-tyrosine + H2O = [protein-PII]-L-tyrosine + UMP + H(+). With respect to regulation, uridylyltransferase (UTase) activity is inhibited by glutamine, while glutamine activates uridylyl-removing (UR) activity. Functionally, modifies, by uridylylation and deuridylylation, the PII regulatory proteins (GlnB and homologs), in response to the nitrogen status of the cell that GlnD senses through the glutamine level. Under low glutamine levels, catalyzes the conversion of the PII proteins and UTP to PII-UMP and PPi, while under higher glutamine levels, GlnD hydrolyzes PII-UMP to PII and UMP (deuridylylation). Thus, controls uridylylation state and activity of the PII proteins, and plays an important role in the regulation of nitrogen assimilation and metabolism. This is Bifunctional uridylyltransferase/uridylyl-removing enzyme from Bordetella avium (strain 197N).